An 838-amino-acid polypeptide reads, in one-letter code: MGNGLWFVGVIILGAAWGQVHDWTEQTDPWFLDGLGMDRMYWRDTNTGRLWLPNTPDPQKPPRGFLAPPDELNLTTASLPLLRWYEERFCFVLVTTAEFPRDPGQLLYIPKTYLLGRPPNASLPAPTTVEPTAQPPPAVAPLKGLLHNPTASVLLRSRAWVTFSAVPDPEALTFPRGDNVATASHPSGPRDTPPPRPPVGARRHPTTELDITHLHNASTTWLATRGLLRSPGRYVYFSPSASTWPVGIWTTGELVLGCDAALVRARYGREFMGLVISMHDSPPAEVMVVPAGQTLDRVGDPADENPPGALPGPPGGPRYRVFVLGSLTRADNGSALDALRRVGGYPEEGTNYAQFLSRAYAEFFSGDAGAEQGPRPPLFWRLTGLLATSGFAFVNAAHANGAVCLSDLLGFLAHSRALAGLAARGAAGCAADSVFFNVSVLDPTARLQLEARLQHLVAEILEREQSLALHALGYQLAFVLDSPSAYDAVAPSAAHLIDALYAEFLGGRVVTTPVVHRALFYASAVLRQPFLAGVPSAVQRERARRSLLIASALCTSDVAAATNADLRTALARADHQKTLFWLPDHFSPCAASLRFDLDESVFILDALAQATRSETPVEVLAQQTHGLASTLTRWAHYNALIRAFVPEASHRCGGQSANVEPRILVPITHNASYVVTHSPLPRGIGYKLTGVDVRRPLFLTYLTATCEGSTRDIESKRLVRTQNQRDLGLVGAVFMRYTPAGEVMSVLLVDTDNTQQQIAAGPTEGAPSVFSSDVPSTALLLFPNGTVIHLLAFDTQPVAAIAPGFLAASALGVVMITAALAGILKVLRTSVPFFWRRE.

The first 18 residues, 1 to 18, serve as a signal peptide directing secretion; sequence MGNGLWFVGVIILGAAWG. The Virion surface segment spans residues 19–803; the sequence is QVHDWTEQTD…DTQPVAAIAP (785 aa). N-linked (GlcNAc...) asparagine; by host glycans are attached at residues N73 and N120. Residues 174–204 form a disordered region; the sequence is FPRGDNVATASHPSGPRDTPPPRPPVGARRH. N216 is a glycosylation site (N-linked (GlcNAc...) asparagine; by host). The tract at residues 259 to 323 is interaction with gL; it reads DAALVRARYG…PGGPRYRVFV (65 aa). N-linked (GlcNAc...) asparagine; by host glycosylation is found at N332, N437, N670, and N784. A helical membrane pass occupies residues 804–824; it reads GFLAASALGVVMITAALAGIL. The Intravirion portion of the chain corresponds to 825–838; the sequence is KVLRTSVPFFWRRE.

The protein belongs to the herpesviridae glycoprotein H family. Interacts with glycoprotein L (gL); this interaction is necessary for the correct processing and cell surface expression of gH. The heterodimer gH/gL seems to interact with gB trimers during fusion. In terms of processing, N-glycosylated, O-glycosylated, and sialylated.

The protein localises to the virion membrane. Its subcellular location is the host cell membrane. It is found in the host endosome membrane. The heterodimer glycoprotein H-glycoprotein L is required for the fusion of viral and plasma membranes leading to virus entry into the host cell. Following initial binding to host receptor, membrane fusion is mediated by the fusion machinery composed of gB and the heterodimer gH/gL. May also be involved in the fusion between the virion envelope and the outer nuclear membrane during virion morphogenesis. This is Envelope glycoprotein H from Homo sapiens (Human).